A 440-amino-acid chain; its full sequence is General transcription factor IIE subunit 1 (440 aa).

Ala-2 is modified (N-acetylalanine). Residues 14-104 (LKRLAKYVIR…NYRTLVNVVK (91 aa)) form the HTH TFE/IIEalpha-type domain. Lys-67 carries the N6-acetyllysine modification. Positions 129, 132, 154, and 157 each coordinate Zn(2+). Residues 129–157 (CPVCCSTFTDLEANQLFDPMTGTFRCTFC) form a C4-type zinc finger. Ser-268 carries the phosphoserine modification. Over residues 333-353 (SSVTAGSVGAAAPVTAANGSD) the composition is skewed to low complexity. A disordered region spans residues 333 to 395 (SSVTAGSVGA…EEFEEVADDP (63 aa)). Acidic residues-rich tracts occupy residues 354–364 (SESETSESDDD) and 381–393 (EDEE…EVAD).

It belongs to the TFIIE alpha subunit family. As to quaternary structure, tetramer of two alpha and two beta chains. Interacts with TAF6/TAFII80. Interacts with ATF7IP. Interacts with SND1. Part of TBP-based Pol II pre-initiation complex (PIC), in which Pol II core assembles with general transcription factors and other specific initiation factors including GTF2E1, GTF2E2, GTF2F1, GTF2F2, TCEA1, ERCC2, ERCC3, GTF2H2, GTF2H3, GTF2H4, GTF2H5, GTF2A1, GTF2A2, GTF2B and TBP; this large multi-subunit PIC complex mediates DNA unwinding and targets Pol II core to the transcription start site where the first phosphodiester bond forms.

It is found in the nucleus. Recruits TFIIH to the initiation complex and stimulates the RNA polymerase II C-terminal domain kinase and DNA-dependent ATPase activities of TFIIH. Both TFIIH and TFIIE are required for promoter clearance by RNA polymerase. The chain is General transcription factor IIE subunit 1 (Gtf2e1) from Mus musculus (Mouse).